The following is a 660-amino-acid chain: uncharacterized protein (660 aa).

A disordered region spans residues 220–239 (ADARGQAAAPPQAQAPAPPD). The span at 222-239 (ARGQAAAPPQAQAPAPPD) shows a compositional bias: low complexity.

This is an uncharacterized protein from Callospermophilus lateralis (Golden-mantled ground squirrel).